The chain runs to 172 residues: Trypsin inhibitor DE-3 (172 aa).

Disulfide bonds link cysteine 39–cysteine 83 and cysteine 132–cysteine 139.

It belongs to the protease inhibitor I3 (leguminous Kunitz-type inhibitor) family.

Functionally, inhibition of trypsin. This Erythrina latissima (Broad-leaved coral tree) protein is Trypsin inhibitor DE-3.